The following is a 232-amino-acid chain: Large ribosomal subunit protein uL1 (232 aa).

It belongs to the universal ribosomal protein uL1 family. In terms of assembly, part of the 50S ribosomal subunit.

Its function is as follows. Binds directly to 23S rRNA. The L1 stalk is quite mobile in the ribosome, and is involved in E site tRNA release. Protein L1 is also a translational repressor protein, it controls the translation of the L11 operon by binding to its mRNA. This chain is Large ribosomal subunit protein uL1, found in Chlamydia abortus (strain DSM 27085 / S26/3) (Chlamydophila abortus).